Here is a 293-residue protein sequence, read N- to C-terminus: Protein orai (293 aa).

Topologically, residues 1–122 are cytoplasmic; sequence MPRSHDPSRV…RAQLKASSRT (122 aa). Residues 62 to 81 form a disordered region; that stretch reads STAGGGSRNGVGSKEGSVTS. A helical membrane pass occupies residues 123–141; sequence SALLAGFAMVCLVELQYDQ. At 142–146 the chain is on the extracellular side; it reads STPKP. Residues 147–167 traverse the membrane as a helical segment; that stretch reads LLIVLGVVTSLLVSVHLLALM. Residues 168-198 are Cytoplasmic-facing; sequence MSTCILPYMEATGCTQDSPHIKLKFYIDLSW. A helical transmembrane segment spans residues 199–219; the sequence is LFSTCIGLLLFLVEIGVIFYV. Residues 220–230 are Extracellular-facing; sequence KFTAVGYPTAG. Residues 231 to 251 traverse the membrane as a helical segment; that stretch reads YITTAMLVPVGVVFVVFSYLI. The Cytoplasmic segment spans residues 252 to 293; that stretch reads HKNRVSHSLGRFKHKVDTMKQFLDVEANLQKSTLAPSTIRDI.

It belongs to the Orai family. As to expression, expressed in gonad sheath cells, hypodermis, intestine and spermatheca. Coexpressed with stim-1.

The protein resides in the membrane. Its function is as follows. Ca(2+) release-activated Ca(2+)-like (CRAC-like) channel subunit which mediates Ca(2+) influx and increase in Ca(2+)-selective current by synergy with the Ca(2+) sensor, stim-1. Required for Ca(2+) and IP3-dependent contractile activity of sheath cells and the spermatheca. Affects brood size and somatic cell function. The chain is Protein orai (orai-1) from Caenorhabditis elegans.